Consider the following 860-residue polypeptide: Pentatricopeptide repeat-containing protein At2g40720 (860 aa).

PPR repeat units follow at residues 59-93 (SVFT…GWRY), 94-124 (DPFI…WSQS), 132-166 (DVTV…GVRP), 167-203 (DAFS…SLDT), 204-234 (DSFL…IEDK), 236-270 (NVVL…SVKL), 271-305 (VSTS…GLHN), 306-340 (DPYV…RLEI), 341-371 (WNAM…SVLP), 372-406 (DSFT…PIQS), 407-437 (TSTI…MEEK), 438-472 (DMVA…DDSL), 475-509 (DSDI…GLVL), 510-540 (NVFV…MSTE), 541-575 (NMVA…GIFP), 576-610 (DSVS…GIPS), 611-641 (DTHL…MQHK), 642-676 (SLIT…GESP), 677-707 (DDVT…MKQD), and 713-743 (NMEH…MPIE). Positions 748-823 (IWLCLLSASR…QPGCSWIEVS (76 aa)) are type E motif. Residues 824–854 (DRTNVFFSGGSSSPMKAEIFNVLNRLKSNMV) form a type E(+) motif region.

Belongs to the PPR family. PCMP-E subfamily.

This is Pentatricopeptide repeat-containing protein At2g40720 (PCMP-E26) from Arabidopsis thaliana (Mouse-ear cress).